Here is a 60-residue protein sequence, read N- to C-terminus: Small, acid-soluble spore protein H (60 aa).

The protein belongs to the SspH family.

It localises to the spore core. The chain is Small, acid-soluble spore protein H from Bacillus velezensis (strain DSM 23117 / BGSC 10A6 / LMG 26770 / FZB42) (Bacillus amyloliquefaciens subsp. plantarum).